An 84-amino-acid polypeptide reads, in one-letter code: MRIDKFLQSVGLVKRRVLATDMCNVGAVWLNGSCAKPSKEVKTGDVISLHYLKGIEEYTILQIPTLKNVPRKDTHLYIAPKTKE.

The S4 RNA-binding domain occupies 1–64 (MRIDKFLQSV…IEEYTILQIP (64 aa)).

This sequence belongs to the RqcP family. Associates with stalled 50S ribosomal subunits. Binds to RqcH, 23S rRNA and the P-site tRNA. Does not require RqcH for association with 50S subunits.

Its function is as follows. Key component of the ribosome quality control system (RQC), a ribosome-associated complex that mediates the extraction of incompletely synthesized nascent chains from stalled ribosomes and their subsequent degradation. RqcH recruits Ala-charged tRNA, and with RqcP directs the elongation of stalled nascent chains on 50S ribosomal subunits, leading to non-templated C-terminal alanine extensions (Ala tail). The Ala tail promotes nascent chain degradation. RqcP is associated with the translocation-like movement of the peptidyl-tRNA from the A-site into the P-site. The chain is RQC P-site tRNA stabilizing factor from Helicobacter pylori (strain J99 / ATCC 700824) (Campylobacter pylori J99).